A 390-amino-acid chain; its full sequence is MTDVALPPAALTLPNDSVGVVTPQRMHFQEPLKLRNGSSIAGYDLMVETYGTLNADRSNAVLVCHALNASHHVAGVYADDPRDVGWWDNMVGPGKPLDTNRFFVIGVNNLGSCFGSTGPMSTNPATGEPYGAAFPVVTVEDWVNAQARVADVFGITQFAAVMGGSLGGMQAVAWSLMYPQRLRHCIVVASTPKLSAQNIAFNEVARSSILSDPDFHGGNYYAHGVKPKRGLRVARMIGHITYLSDEDMAEKFGRELKTEDIRFSFDVEFQVESYLRYQGDKFAEYFDANTYLLITRALDYFDPALAYGGDLTRAMAQTQASFLVASFTTDWRFAPNRSRELVKALLDNKRPVSYAEIDAPHGHDAFLLDDPRYHNLMRAYYDRIAEEIGA.

In terms of domain architecture, AB hydrolase-1 spans 59–369 (NAVLVCHALN…PHGHDAFLLD (311 aa)). The active-site Nucleophile is the S165. R235 provides a ligand contact to substrate. Catalysis depends on residues D330 and H363. Residue D364 coordinates substrate.

It belongs to the AB hydrolase superfamily. MetX family. Homodimer.

It localises to the cytoplasm. The enzyme catalyses L-homoserine + succinyl-CoA = O-succinyl-L-homoserine + CoA. It functions in the pathway amino-acid biosynthesis; L-methionine biosynthesis via de novo pathway; O-succinyl-L-homoserine from L-homoserine: step 1/1. Functionally, transfers a succinyl group from succinyl-CoA to L-homoserine, forming succinyl-L-homoserine. This Cupriavidus pinatubonensis (strain JMP 134 / LMG 1197) (Cupriavidus necator (strain JMP 134)) protein is Homoserine O-succinyltransferase.